A 330-amino-acid polypeptide reads, in one-letter code: Mas-related G-protein coupled receptor member B8 (330 aa).

At 1-33 (MDSSFPDWNIEFREQNESYFMESSSCDMSLAMS) the chain is on the extracellular side. Asparagine 16 is a glycosylation site (N-linked (GlcNAc...) asparagine). A helical transmembrane segment spans residues 34-54 (LLSIIIAIIGLTGNVIVLQLL). At 55 to 62 (GFHMHRNA) the chain is on the cytoplasmic side. Residues 63–83 (FSVYIFNLSGANFLFLCTHIV) form a helical membrane-spanning segment. The Extracellular segment spans residues 84–101 (FSLENLIRQFHYIDIHMA). A helical membrane pass occupies residues 102–122 (LFSVNVTILAYLAGVSMITAI). At 123–146 (SVEYWLSVLWPTWYHAQRPKHTST) the chain is on the cytoplasmic side. Residues 147–167 (VICTLLWVFSLLLTLWNWIIC) form a helical membrane-spanning segment. Residues 168-177 (KVLDYIYNWD) lie on the Extracellular side of the membrane. The helical transmembrane segment at 178–198 (MCWKLALIIVVWLLVLFVVLS) threads the bilayer. Over 199-219 (RSNQALLFRVFCGSQQTPVTR) the chain is Cytoplasmic. Residues 220–240 (LLVTIMLTALVVLICGFGIGI) traverse the membrane as a helical segment. The Extracellular segment spans residues 241–260 (CFFYWKKEENSIMPCGYFYE). Residues 261–281 (TILLLSGVNSCANPIICLFVG) traverse the membrane as a helical segment. The Cytoplasmic portion of the chain corresponds to 282-330 (SIKHCQFQCGTLRLILQRAIQESPEEEDEEVEEVVEQEGGEEDEESTTL). The segment at 302-330 (QESPEEEDEEVEEVVEQEGGEEDEESTTL) is disordered. The segment covering 304-330 (SPEEEDEEVEEVVEQEGGEEDEESTTL) has biased composition (acidic residues).

It belongs to the G-protein coupled receptor 1 family. Mas subfamily.

It is found in the membrane. Functionally, orphan receptor. Probably involved in the function of nociceptive neurons. May regulate nociceptor function and/or development, including the sensation or modulation of pain. This is Mas-related G-protein coupled receptor member B8 (Mrgprb8) from Mus musculus (Mouse).